We begin with the raw amino-acid sequence, 151 residues long: UPF0208 membrane protein YfbV (151 aa).

A run of 2 helical transmembrane segments spans residues 46–65 (YAIRFMPPIAVFTLCWQIAL) and 69–91 (LGPAVATALFALSLPMQGLWWLG).

Belongs to the UPF0208 family.

The protein resides in the cell inner membrane. The polypeptide is UPF0208 membrane protein YfbV (Shigella flexneri serotype 5b (strain 8401)).